Here is a 750-residue protein sequence, read N- to C-terminus: NAD(P)H-quinone oxidoreductase subunit 5, chloroplastic (750 aa).

16 helical membrane passes run 9-29 (WIIP…LLLF), 40-60 (WAFP…DLSI), 89-109 (IDSL…LVLI), 125-145 (FAYL…SNLI), 147-167 (IYVF…FWFT), 185-205 (GDFG…SLEF), 219-239 (NEVN…GSVA), 258-278 (TPIS…FLVA), 280-300 (LLPL…IGII), 327-347 (LGYM…FHLI), 354-374 (ALLF…VGYS), 396-416 (TSFL…CFWS), 425-445 (WLYS…TAFY), 554-574 (FSIL…ISFS), 607-627 (FLTN…IASF), and 728-748 (YILL…FLFT).

This sequence belongs to the complex I subunit 5 family. NDH is composed of at least 16 different subunits, 5 of which are encoded in the nucleus.

The protein resides in the plastid. It localises to the chloroplast thylakoid membrane. It carries out the reaction a plastoquinone + NADH + (n+1) H(+)(in) = a plastoquinol + NAD(+) + n H(+)(out). The catalysed reaction is a plastoquinone + NADPH + (n+1) H(+)(in) = a plastoquinol + NADP(+) + n H(+)(out). Its function is as follows. NDH shuttles electrons from NAD(P)H:plastoquinone, via FMN and iron-sulfur (Fe-S) centers, to quinones in the photosynthetic chain and possibly in a chloroplast respiratory chain. The immediate electron acceptor for the enzyme in this species is believed to be plastoquinone. Couples the redox reaction to proton translocation, and thus conserves the redox energy in a proton gradient. This chain is NAD(P)H-quinone oxidoreductase subunit 5, chloroplastic (ndhF), found in Glycine max (Soybean).